The sequence spans 296 residues: Fructose-bisphosphate aldolase class 1 (296 aa).

Residue Glu175 is the Proton acceptor of the active site. Residue Lys212 is the Schiff-base intermediate with dihydroxyacetone-P of the active site.

The protein belongs to the class I fructose-bisphosphate aldolase family.

It carries out the reaction beta-D-fructose 1,6-bisphosphate = D-glyceraldehyde 3-phosphate + dihydroxyacetone phosphate. Its pathway is carbohydrate degradation; glycolysis; D-glyceraldehyde 3-phosphate and glycerone phosphate from D-glucose: step 4/4. The chain is Fructose-bisphosphate aldolase class 1 from Staphylococcus aureus (strain MSSA476).